A 232-amino-acid chain; its full sequence is Large ribosomal subunit protein uL1 (232 aa).

The protein belongs to the universal ribosomal protein uL1 family. Part of the 50S ribosomal subunit.

Its function is as follows. Binds directly to 23S rRNA. The L1 stalk is quite mobile in the ribosome, and is involved in E site tRNA release. Functionally, protein L1 is also a translational repressor protein, it controls the translation of the L11 operon by binding to its mRNA. In Aromatoleum aromaticum (strain DSM 19018 / LMG 30748 / EbN1) (Azoarcus sp. (strain EbN1)), this protein is Large ribosomal subunit protein uL1.